The sequence spans 88 residues: Small ribosomal subunit protein uS17 (88 aa).

It belongs to the universal ribosomal protein uS17 family. In terms of assembly, part of the 30S ribosomal subunit.

Functionally, one of the primary rRNA binding proteins, it binds specifically to the 5'-end of 16S ribosomal RNA. This is Small ribosomal subunit protein uS17 from Pseudomonas savastanoi pv. phaseolicola (strain 1448A / Race 6) (Pseudomonas syringae pv. phaseolicola (strain 1448A / Race 6)).